A 239-amino-acid polypeptide reads, in one-letter code: Terpene cyclase idtB (239 aa).

The next 5 membrane-spanning stretches (helical) occupy residues 20–40 (MADTFVAGMGLGWIVNYALMI), 50–70 (CMALLPLCNNIAWELTYTIVY), 75–95 (RVELLVFAIGLTLNFFIMVGA), 113–133 (AGFILLVGTLLCFTGHVALAM), and 138–158 (GLAYSWGAVVCQLALSIGGLF). Asparagine 164 is a glycosylation site (N-linked (GlcNAc...) asparagine). The helical transmembrane segment at 197 to 217 (EVFGWLASPLVLWSLVTFLLA) threads the bilayer.

Belongs to the paxB family.

It localises to the membrane. Its pathway is secondary metabolite biosynthesis. In terms of biological role, terpene cyclase; part of the gene cluster that mediates the biosynthesis of paspalitrems, indole-diterpene (IDT) mycotoxins that are potent tremorgens in mammals. The geranylgeranyl diphosphate (GGPP) synthase idtG is proposed to catalyze the first step in IDT biosynthesis via catalysis of a series of iterative condensations of isopentenyl diphosphate (IPP) with dimethylallyl diphosphate (DMAPP), geranyl diphosphate (GPP), and farnesyl diphosphate (FPP), to form GGPP. Condensation of indole-3-glycerol phosphate with GGPP by the prenyltransferase idtC then forms 3-geranylgeranylindole (3-GGI). Epoxidation of the two terminal alkenes of the geranylgeranyl moiety by the FAD-dependent monooxygenase idtM, and cyclization by the terpene cyclase idtB then leads to the production of paspaline. The cytochrome P450 monooxygenase idtP then catalyzes oxidative elimination of the pendant methyl group at C-12 of paspaline and generates the C-10 ketone to yield 13-desoxypaxilline. The cytochrome P450 monooxygenase idtQ may catalyze the C-13 oxidation of 13-desoxypaxilline to afford paxilline. Considering that both paspalicine and paxilline were detected in C.paspali, idtQ also catalyzes the formation of paspalinine from 13-desoxypaxilline via paspalicine as an intermediate. Finally, the alpha-prenyltransferase idtF prenylates paspalinine at the C-20 or the C-21 positions to yield paspalitrems A and C, respectively. The hydroxylation of paspalitrem A at C-32 by a still unknown oxidase affords paspalitrem B. The sequence is that of Terpene cyclase idtB from Claviceps paspali (Rye ergot fungus).